The sequence spans 118 residues: MTRVKRGNVARKRRNKILKLAKGFRGSHSTLFRTANQQVMKALRSAYRDRKKKKRDFRRLWITRINAAARQHGLSYSQLIGNLKKADIQLNRKMLAQLAVLDPASFGKVAELAIQAKG.

Belongs to the bacterial ribosomal protein bL20 family.

Functionally, binds directly to 23S ribosomal RNA and is necessary for the in vitro assembly process of the 50S ribosomal subunit. It is not involved in the protein synthesizing functions of that subunit. The polypeptide is Large ribosomal subunit protein bL20 (Trichormus variabilis (strain ATCC 29413 / PCC 7937) (Anabaena variabilis)).